The following is a 217-amino-acid chain: N-(5'-phosphoribosyl)anthranilate isomerase (217 aa).

The protein belongs to the TrpF family.

It catalyses the reaction N-(5-phospho-beta-D-ribosyl)anthranilate = 1-(2-carboxyphenylamino)-1-deoxy-D-ribulose 5-phosphate. It participates in amino-acid biosynthesis; L-tryptophan biosynthesis; L-tryptophan from chorismate: step 3/5. The chain is N-(5'-phosphoribosyl)anthranilate isomerase from Chlorobium phaeobacteroides (strain BS1).